A 357-amino-acid chain; its full sequence is (4E)-oxalomesaconate Delta-isomerase (357 aa).

It belongs to the PrpF family.

The catalysed reaction is (1E)-4-oxobut-1-ene-1,2,4-tricarboxylate = (3Z)-2-oxo-4-carboxy-3-hexenedioate. Its pathway is secondary metabolite metabolism; lignin degradation. Its function is as follows. Contributes to the degradation of lignin at the level of the protocatechuate 4,5-cleavage pathway. Catalyzes the isomerization of the double bond between C4 and C5 in (4E)-oxalomesaconate (OMA) to (3Z)-2-keto-4-carboxy-3-hexenedioate (KCH), where the double bond has migrated between C3 and C4 via a 1,3-allylic isomerization. This chain is (4E)-oxalomesaconate Delta-isomerase, found in Novosphingobium sp. (strain KA1) (Sphingomonas sp. (strain KA1)).